Consider the following 526-residue polypeptide: D-arabinono-1,4-lactone oxidase (526 aa).

The FAD-binding PCMH-type domain maps to 19–193 (YSAKPERYFQ…VSATIRVVPG (175 aa)). The residue at position 56 (H56) is a Pros-8alpha-FAD histidine.

The protein belongs to the oxygen-dependent FAD-linked oxidoreductase family. In terms of assembly, monomer. FAD serves as cofactor. In terms of processing, the N-terminus is blocked.

It localises to the mitochondrion membrane. It carries out the reaction D-arabinono-1,4-lactone + O2 = dehydro-D-arabinono-1,4-lactone + H2O2 + H(+). The protein operates within cofactor biosynthesis; D-erythroascorbate biosynthesis; dehydro-D-arabinono-1,4-lactone from D-arabinose: step 2/2. Can oxidize L-gulono-1,4-lactone as well as D-arabinono-1,4-lactone and L-galactono-1,4-lactone. In Saccharomyces cerevisiae (strain ATCC 204508 / S288c) (Baker's yeast), this protein is D-arabinono-1,4-lactone oxidase (ALO1).